The following is a 332-amino-acid chain: Tetraacyldisaccharide 4'-kinase (332 aa).

Position 60–67 (60–67 (TVGGTGKT)) interacts with ATP.

Belongs to the LpxK family.

It carries out the reaction a lipid A disaccharide + ATP = a lipid IVA + ADP + H(+). It functions in the pathway glycolipid biosynthesis; lipid IV(A) biosynthesis; lipid IV(A) from (3R)-3-hydroxytetradecanoyl-[acyl-carrier-protein] and UDP-N-acetyl-alpha-D-glucosamine: step 6/6. Its function is as follows. Transfers the gamma-phosphate of ATP to the 4'-position of a tetraacyldisaccharide 1-phosphate intermediate (termed DS-1-P) to form tetraacyldisaccharide 1,4'-bis-phosphate (lipid IVA). In Pseudomonas paraeruginosa (strain DSM 24068 / PA7) (Pseudomonas aeruginosa (strain PA7)), this protein is Tetraacyldisaccharide 4'-kinase.